The following is a 196-amino-acid chain: CASP-like protein 2U1 (196 aa).

The Cytoplasmic segment spans residues 1–11 (MAPMECVRRRN). A helical transmembrane segment spans residues 12 to 32 (VGELVLRCAATLVCMLSLMLL). Residues 33–58 (VRDQQIAVQEVGVTSVTTQLRYSSST) are Extracellular-facing. The helical transmembrane segment at 59 to 79 (GLVYLVYANGLVALYCFVVVL) threads the bilayer. Topologically, residues 80 to 95 (TSSFNGGSVMRRNKSG) are cytoplasmic. Residues 96-116 (AWALFVLDQVLACILLSAASA) form a helical membrane-spanning segment. The Extracellular portion of the chain corresponds to 117–148 (ASEIAFLVEKGAKKTIWDSKCIVYGHFCRMLE). A helical transmembrane segment spans residues 149–169 (VSIATSFIAVIMLGSICVLSA). The Cytoplasmic segment spans residues 170-196 (KQLFQQYTHYARIVNMVKLKSTPNSLL).

The protein belongs to the Casparian strip membrane proteins (CASP) family. In terms of assembly, homodimer and heterodimers.

It is found in the cell membrane. The protein is CASP-like protein 2U1 of Pteridium aquilinum subsp. aquilinum (Bracken fern).